The sequence spans 163 residues: Odorant-binding protein 1a (163 aa).

The first 16 residues, 1–16, serve as a signal peptide directing secretion; it reads MAKFLLLALTFGLAHA. 2 disulfide bridges follow: C50–C54 and C69–C161.

This sequence belongs to the calycin superfamily. Lipocalin family. In terms of assembly, may form a heterodimer with OBP1B. In terms of processing, the N-terminus may be blocked. Expressed in nasal mucosa (at protein level). Specifically detected in septal and lateral nasal glands.

The protein resides in the secreted. Its function is as follows. Binds the chemical odorant 2-isobutyl-3-methoxypyrazine. This is Odorant-binding protein 1a from Mus musculus (Mouse).